A 325-amino-acid chain; its full sequence is Glutarate 2-hydroxylase (325 aa).

3 residues coordinate Fe cation: histidine 160, aspartate 162, and histidine 292.

Belongs to the glutarate hydroxylase family. Homotetramer. Fe(2+) is required as a cofactor.

The enzyme catalyses glutarate + 2-oxoglutarate + O2 = (S)-2-hydroxyglutarate + succinate + CO2. It functions in the pathway amino-acid degradation. Functionally, acts as an alpha-ketoglutarate-dependent dioxygenase catalyzing hydroxylation of glutarate (GA) to L-2-hydroxyglutarate (L2HG). Functions in a L-lysine degradation pathway that proceeds via cadaverine, glutarate and L-2-hydroxyglutarate. The chain is Glutarate 2-hydroxylase from Salmonella newport (strain SL254).